A 427-amino-acid chain; its full sequence is 3-phosphoshikimate 1-carboxyvinyltransferase (427 aa).

The 3-phosphoshikimate site is built by Lys-22, Ser-23, and Arg-27. Phosphoenolpyruvate is bound at residue Lys-22. Residues Gly-96 and Arg-124 each coordinate phosphoenolpyruvate. 3-phosphoshikimate is bound by residues Ser-169, Ser-170, Gln-171, Ser-197, Asp-313, Asn-336, and Lys-340. Gln-171 provides a ligand contact to phosphoenolpyruvate. Asp-313 acts as the Proton acceptor in catalysis. Residues Arg-344, Arg-386, and Lys-411 each coordinate phosphoenolpyruvate.

This sequence belongs to the EPSP synthase family. Monomer.

It localises to the cytoplasm. The catalysed reaction is 3-phosphoshikimate + phosphoenolpyruvate = 5-O-(1-carboxyvinyl)-3-phosphoshikimate + phosphate. Its pathway is metabolic intermediate biosynthesis; chorismate biosynthesis; chorismate from D-erythrose 4-phosphate and phosphoenolpyruvate: step 6/7. Functionally, catalyzes the transfer of the enolpyruvyl moiety of phosphoenolpyruvate (PEP) to the 5-hydroxyl of shikimate-3-phosphate (S3P) to produce enolpyruvyl shikimate-3-phosphate and inorganic phosphate. The protein is 3-phosphoshikimate 1-carboxyvinyltransferase of Salmonella typhimurium (strain LT2 / SGSC1412 / ATCC 700720).